The primary structure comprises 136 residues: uncharacterized protein (136 aa).

This is an uncharacterized protein from Ictaluridae (bullhead catfishes).